We begin with the raw amino-acid sequence, 261 residues long: Imidazole glycerol phosphate synthase subunit HisF (261 aa).

Residues Asp-16 and Asp-135 contribute to the active site.

The protein belongs to the HisA/HisF family. As to quaternary structure, heterodimer of HisH and HisF.

The protein resides in the cytoplasm. It carries out the reaction 5-[(5-phospho-1-deoxy-D-ribulos-1-ylimino)methylamino]-1-(5-phospho-beta-D-ribosyl)imidazole-4-carboxamide + L-glutamine = D-erythro-1-(imidazol-4-yl)glycerol 3-phosphate + 5-amino-1-(5-phospho-beta-D-ribosyl)imidazole-4-carboxamide + L-glutamate + H(+). It functions in the pathway amino-acid biosynthesis; L-histidine biosynthesis; L-histidine from 5-phospho-alpha-D-ribose 1-diphosphate: step 5/9. In terms of biological role, IGPS catalyzes the conversion of PRFAR and glutamine to IGP, AICAR and glutamate. The HisF subunit catalyzes the cyclization activity that produces IGP and AICAR from PRFAR using the ammonia provided by the HisH subunit. The protein is Imidazole glycerol phosphate synthase subunit HisF of Mycobacterium sp. (strain JLS).